An 889-amino-acid polypeptide reads, in one-letter code: Protein translocase subunit SecA (889 aa).

ATP is bound by residues Q87, 105–109, and D494; that span reads GEGKT. The interval 823-889 is disordered; it reads ESLRPEEADL…RMDKDTKGKR (67 aa). The segment covering 867–889 has biased composition (basic and acidic residues); it reads PRDDRPMNREERRRMDKDTKGKR.

Belongs to the SecA family. In terms of assembly, monomer and homodimer. Part of the essential Sec protein translocation apparatus which comprises SecA, SecYEG and auxiliary proteins SecDF-YajC and YidC.

The protein resides in the cell inner membrane. Its subcellular location is the cytoplasm. The enzyme catalyses ATP + H2O + cellular proteinSide 1 = ADP + phosphate + cellular proteinSide 2.. In terms of biological role, part of the Sec protein translocase complex. Interacts with the SecYEG preprotein conducting channel. Has a central role in coupling the hydrolysis of ATP to the transfer of proteins into and across the cell membrane, serving as an ATP-driven molecular motor driving the stepwise translocation of polypeptide chains across the membrane. This Bdellovibrio bacteriovorus (strain ATCC 15356 / DSM 50701 / NCIMB 9529 / HD100) protein is Protein translocase subunit SecA.